Here is an 865-residue protein sequence, read N- to C-terminus: Leucine--tRNA ligase (865 aa).

The 'HIGH' region motif lies at 44–54 (PYPSGRIHVGH). A 'KMSKS' region motif is present at residues 625 to 629 (KMSKS). Position 628 (K628) interacts with ATP.

Belongs to the class-I aminoacyl-tRNA synthetase family.

Its subcellular location is the cytoplasm. The enzyme catalyses tRNA(Leu) + L-leucine + ATP = L-leucyl-tRNA(Leu) + AMP + diphosphate. The sequence is that of Leucine--tRNA ligase from Maricaulis maris (strain MCS10) (Caulobacter maris).